Here is a 346-residue protein sequence, read N- to C-terminus: ATP-dependent (S)-NAD(P)H-hydrate dehydratase 2 (346 aa).

The disordered stretch occupies residues 1–20; it reads MMVHSPLATGPHPTTHLEPT. One can recognise a YjeF C-terminal domain in the interval 28 to 339; it reads LLRKAFQMIP…GYIGEAFEQV (312 aa). Residues glycine 135 and 188 to 194 each bind (6S)-NADPHX; that span reads NHVEFQR. ATP is bound by residues 228–232 and 248–257; these read KGSID and GSPKRCGGQG. Aspartate 258 contacts (6S)-NADPHX.

This sequence belongs to the NnrD/CARKD family. It depends on Mg(2+) as a cofactor.

It localises to the cytoplasm. The enzyme catalyses (6S)-NADHX + ATP = ADP + phosphate + NADH + H(+). The catalysed reaction is (6S)-NADPHX + ATP = ADP + phosphate + NADPH + H(+). In terms of biological role, catalyzes the dehydration of the S-form of NAD(P)HX at the expense of ATP, which is converted to ADP. Together with NAD(P)HX epimerase, which catalyzes the epimerization of the S- and R-forms, the enzyme allows the repair of both epimers of NAD(P)HX, a damaged form of NAD(P)H that is a result of enzymatic or heat-dependent hydration. The chain is ATP-dependent (S)-NAD(P)H-hydrate dehydratase 2 from Puccinia graminis f. sp. tritici (strain CRL 75-36-700-3 / race SCCL) (Black stem rust fungus).